The following is a 101-amino-acid chain: Protein translation factor SUI1 homolog (101 aa).

It belongs to the SUI1 family.

The protein is Protein translation factor SUI1 homolog of Aeropyrum pernix (strain ATCC 700893 / DSM 11879 / JCM 9820 / NBRC 100138 / K1).